A 1255-amino-acid chain; its full sequence is ATP-binding cassette sub-family B member 5 (1255 aa).

The chain crosses the membrane as a helical span at residues 46-66 (IVLMTLGILASMINGATVPLM). An ABC transmembrane type-1 1 domain is found at 51 to 351 (LGILASMING…SVAPHLETFT (301 aa)). Residues asparagine 86 and asparagine 92 are each glycosylated (N-linked (GlcNAc...) asparagine). The helical transmembrane segment at 104-124 (IIVLTLYYIGIGAAALIFGYV) threads the bilayer. N-linked (GlcNAc...) asparagine glycosylation occurs at asparagine 189. 2 consecutive transmembrane segments (helical) span residues 290-310 (LSLG…FWYG) and 314-334 (IFGG…FSVI). N-linked (GlcNAc...) asparagine glycans are attached at residues asparagine 372 and asparagine 391. In terms of domain architecture, ABC transporter 1 spans 387–623 (IEFKNVSFSY…QGLYYSLAMA (237 aa)). Residue 422 to 429 (GPSGSGKS) participates in ATP binding. Asparagine 643 carries N-linked (GlcNAc...) asparagine glycosylation. 2 helical membrane passes run 694–714 (VLGT…SIIF) and 738–758 (MMLV…GLFY). The 288-residue stretch at 694 to 981 (VLGTLASALN…TLVWAPEYSK (288 aa)) folds into the ABC transmembrane type-1 2 domain. A glycan (N-linked (GlcNAc...) asparagine) is linked at asparagine 790. 3 helical membrane-spanning segments follow: residues 814-836 (LGIV…IYGW), 841-863 (LILS…MAGF), and 955-975 (MFIV…TLVW). The ABC transporter 2 domain maps to 1016 to 1254 (LEFREVSFVY…GDTYFKLVAA (239 aa)). N-linked (GlcNAc...) asparagine glycosylation is present at asparagine 1036. ATP is bound at residue 1051–1058 (GSSGCGKS). 3 N-linked (GlcNAc...) asparagine glycosylation sites follow: asparagine 1105, asparagine 1189, and asparagine 1229.

This sequence belongs to the ABC transporter superfamily. ABCB family. Multidrug resistance exporter (TC 3.A.1.201) subfamily. In terms of tissue distribution, in developing eye, expressed in basal limbal epithelium but not in central cornea. Acts as a marker of limbal stem cells.

The protein localises to the cell membrane. It carries out the reaction daunorubicin(in) + ATP + H2O = daunorubicin(out) + ADP + phosphate + H(+). Functionally, energy-dependent efflux transporter responsible for decreased drug accumulation in multidrug-resistant cells. Specifically present in limbal stem cells, where it plays a key role in corneal development and repair. The chain is ATP-binding cassette sub-family B member 5 from Mus musculus (Mouse).